The primary structure comprises 351 residues: Chorismate synthase (351 aa).

The segment at 39 to 60 is disordered; the sequence is EDIQRDLERRRPGKRLTSPRGE. Arginine 48 and arginine 53 together coordinate NADP(+). FMN is bound by residues 124–126, alanine 276, 291–295, and arginine 317; these read RSS and KPIPS.

Belongs to the chorismate synthase family. In terms of assembly, homotetramer. Requires FMNH2 as cofactor.

The enzyme catalyses 5-O-(1-carboxyvinyl)-3-phosphoshikimate = chorismate + phosphate. The protein operates within metabolic intermediate biosynthesis; chorismate biosynthesis; chorismate from D-erythrose 4-phosphate and phosphoenolpyruvate: step 7/7. In terms of biological role, catalyzes the anti-1,4-elimination of the C-3 phosphate and the C-6 proR hydrogen from 5-enolpyruvylshikimate-3-phosphate (EPSP) to yield chorismate, which is the branch point compound that serves as the starting substrate for the three terminal pathways of aromatic amino acid biosynthesis. This reaction introduces a second double bond into the aromatic ring system. The polypeptide is Chorismate synthase (Syntrophobacter fumaroxidans (strain DSM 10017 / MPOB)).